The primary structure comprises 300 residues: Acetylglutamate kinase (300 aa).

Substrate is bound by residues 73–74 (GG), Arg-95, and Asn-197.

It belongs to the acetylglutamate kinase family. ArgB subfamily.

The protein localises to the cytoplasm. The catalysed reaction is N-acetyl-L-glutamate + ATP = N-acetyl-L-glutamyl 5-phosphate + ADP. It functions in the pathway amino-acid biosynthesis; L-arginine biosynthesis; N(2)-acetyl-L-ornithine from L-glutamate: step 2/4. In terms of biological role, catalyzes the ATP-dependent phosphorylation of N-acetyl-L-glutamate. In Polynucleobacter asymbioticus (strain DSM 18221 / CIP 109841 / QLW-P1DMWA-1) (Polynucleobacter necessarius subsp. asymbioticus), this protein is Acetylglutamate kinase.